A 434-amino-acid chain; its full sequence is Putative nuclease OPG089 (434 aa).

Residues Asp33, Asp74, Glu168, Asp170, Asp196, and Asp198 each coordinate Mg(2+).

This sequence belongs to the XPG/RAD2 endonuclease family. FEN1 subfamily. Mg(2+) serves as cofactor.

The protein localises to the virion. Putative nuclease that seems to be required for double-strand break repair, homologous recombination, and production of full-length viral genomic DNA. This Vaccinia virus (strain Copenhagen) (VACV) protein is Putative nuclease OPG089 (OPG089).